The sequence spans 243 residues: MGRRIQGQRRGRGTSTFRAPSHRYKAELSHKQSESDDTITGTIVDIEHDPARSAPVAAVEFDDGDRRLVLAPEGIRVGETMQIGVSAEIKPGNTLPLREIPEGVPVCNVESQVGDGGKFARASGTSAQLMTHDRDVVVIELPSGETKRLSPACQATIGVVAGGGRTEKPFVKAGKKHHKMKARGIKWPRVRGVAMNAVDHPFGGGGRQHPGQPKSVSRDAPPGRKVGDIASKRTGRGGNGSSE.

Positions 1 to 12 (MGRRIQGQRRGR) are enriched in basic residues. 2 disordered regions span residues 1–38 (MGRR…SDDT) and 198–243 (VDHP…GSSE). 2 stretches are compositionally biased toward basic and acidic residues: residues 24-34 (YKAELSHKQSE) and 221-231 (PPGRKVGDIAS).

It belongs to the universal ribosomal protein uL2 family. As to quaternary structure, part of the 50S ribosomal subunit. Forms a bridge to the 30S subunit in the 70S ribosome.

In terms of biological role, one of the primary rRNA binding proteins. Required for association of the 30S and 50S subunits to form the 70S ribosome, for tRNA binding and peptide bond formation. It has been suggested to have peptidyltransferase activity; this is somewhat controversial. Makes several contacts with the 16S rRNA in the 70S ribosome. This Haloquadratum walsbyi (strain DSM 16790 / HBSQ001) protein is Large ribosomal subunit protein uL2.